The chain runs to 838 residues: 1,4-alpha-glucan branching enzyme GlgB 1 (838 aa).

Residues Met-1–Ala-11 show a composition bias toward basic and acidic residues. Disordered regions lie at residues Met-1–Lys-98 and Pro-116–Gly-142. Positions Lys-29–Lys-57 are enriched in low complexity. Catalysis depends on Asp-513, which acts as the Nucleophile. Glu-566 (proton donor) is an active-site residue. Positions Thr-793–Ser-822 are disordered.

It belongs to the glycosyl hydrolase 13 family. GlgB subfamily. As to quaternary structure, monomer.

The catalysed reaction is Transfers a segment of a (1-&gt;4)-alpha-D-glucan chain to a primary hydroxy group in a similar glucan chain.. It functions in the pathway glycan biosynthesis; glycogen biosynthesis. Functionally, catalyzes the formation of the alpha-1,6-glucosidic linkages in glycogen by scission of a 1,4-alpha-linked oligosaccharide from growing alpha-1,4-glucan chains and the subsequent attachment of the oligosaccharide to the alpha-1,6 position. This chain is 1,4-alpha-glucan branching enzyme GlgB 1, found in Streptomyces avermitilis (strain ATCC 31267 / DSM 46492 / JCM 5070 / NBRC 14893 / NCIMB 12804 / NRRL 8165 / MA-4680).